A 268-amino-acid chain; its full sequence is MKILVSNDDGIFAEGIRSLANGLAAVGHEVFVVCPDKERSATGHGLTLHQPIRAEIVKSIFDDRITAWACSGTPADCVKLALFSLLETQPDLVLAGINHGPNLGTDIFYSGTVSAAMEGIVENIPSIAFSLGSYTSREFEVAVNFAQSLVQKIESQPLDNLMLLNVNIPAVKETEIAGVKITRQGVCRYIDIFKKRVDPRGKTYYWLAGELLEETEETKDQAIPDKYNTDVEAMREKYITITPLQYNLTYGRQLTYLQKWKIDNFSYN.

A divalent metal cation contacts are provided by D8, D9, S40, and N98.

The protein belongs to the SurE nucleotidase family. The cofactor is a divalent metal cation.

It is found in the cytoplasm. It carries out the reaction a ribonucleoside 5'-phosphate + H2O = a ribonucleoside + phosphate. Functionally, nucleotidase that shows phosphatase activity on nucleoside 5'-monophosphates. The protein is 5'-nucleotidase SurE of Trichodesmium erythraeum (strain IMS101).